The following is a 299-amino-acid chain: MINSIRIGTRNSTLALIQTNLVIAQIKQFFPDINCEIVPIITSGDLIQNKPLYDIGGKALFLKEIEQALLDKKIDLAVHSLKDIPGRIPVDLVIAAVLEREDPRDVLVCLNYKSIETLPQNAVIGSSAVRRKAFIKKIRPDLNIKVFRGNVDSRIKKLMTGEVDATILSYAGLKRLNAFNKKYCHLIEYSQILPCVGQGVIAVEIRKDDNAMFNICNQINHIPTFELIKPERAFLEHLDANCSTPIGAYSQYLDAYNIQTDFMLGKLDCNKIIFQTEITNINTSRECGIKAAKMMLAQQ.

At C242 the chain carries S-(dipyrrolylmethanemethyl)cysteine.

The protein belongs to the HMBS family. Monomer. The cofactor is dipyrromethane.

The enzyme catalyses 4 porphobilinogen + H2O = hydroxymethylbilane + 4 NH4(+). It participates in porphyrin-containing compound metabolism; protoporphyrin-IX biosynthesis; coproporphyrinogen-III from 5-aminolevulinate: step 2/4. Functionally, tetrapolymerization of the monopyrrole PBG into the hydroxymethylbilane pre-uroporphyrinogen in several discrete steps. The polypeptide is Porphobilinogen deaminase (Rickettsia typhi (strain ATCC VR-144 / Wilmington)).